The chain runs to 401 residues: Dynactin subunit 2 (401 aa).

Positions 1 to 25 (MADPKYADLPGIARNEPDVYETSDL) are disordered. At Ala-2 the chain carries N-acetylalanine. The residue at position 6 (Tyr-6) is a Phosphotyrosine. Ser-83 is modified (phosphoserine). A Phosphotyrosine modification is found at Tyr-86. The stretch at 99 to 132 (PQQKYQRLLHEVQELTTEVEKIKTTVKESATEEK) forms a coiled coil. Residues Thr-134 and Thr-198 each carry the phosphothreonine modification. Positions 214–244 (EQDKFSQAAKVAELEKRLTELETAVRCDQDA) form a coiled coil. Ser-320 carries the post-translational modification Phosphoserine. Residues 379-399 (RENLATVEGNFASIDERMKKL) adopt a coiled-coil conformation.

It belongs to the dynactin subunit 2 family. In terms of assembly, subunit of dynactin, a multiprotein complex part of a tripartite complex with dynein and a adapter, such as BICDL1, BICD2 or HOOK3. The dynactin complex is built around ACTR1A/ACTB filament and consists of an actin-related filament composed of a shoulder domain, a pointed end and a barbed end. Its length is defined by its flexible shoulder domain. The soulder is composed of 2 DCTN1 subunits, 4 DCTN2 and 2 DCTN3. The 4 DCNT2 (via N-terminus) bind the ACTR1A filament and act as molecular rulers to determine the length. The pointed end is important for binding dynein-dynactin cargo adapters and consists of 4 subunits: ACTR10, DCNT4, DCTN5 and DCTN6. The barbed end is composed of a CAPZA1:CAPZB heterodimers, which binds ACTR1A/ACTB filament and dynactin and stabilizes dynactin. Interacts with BICD2 and CEP135. Interacts with DYNAP. Interacts with ECPAS. Interacts with MAPRE1.

The protein resides in the cytoplasm. Its subcellular location is the cytoskeleton. It localises to the microtubule organizing center. It is found in the centrosome. The protein localises to the membrane. Part of the dynactin complex that activates the molecular motor dynein for ultra-processive transport along microtubules. In the dynactin soulder domain, binds the ACTR1A filament and acts as a molecular ruler to determine the length. Modulates cytoplasmic dynein binding to an organelle, and plays a role in prometaphase chromosome alignment and spindle organization during mitosis. Involved in anchoring microtubules to centrosomes. May play a role in synapse formation during brain development. The chain is Dynactin subunit 2 from Homo sapiens (Human).